We begin with the raw amino-acid sequence, 996 residues long: Sarcoplasmic/endoplasmic reticulum calcium ATPase 1 (996 aa).

Residues 1–48 are Cytoplasmic-facing; it reads MENAHTKSPAECLSYFGVNEHTGLSPDQFKKNLDKFGYNELPAEEGKS. Residues 49–69 form a helical membrane-spanning segment; it reads IWDLIVEQFEDLLVRILLLAA. Residues 70-89 lie on the Lumenal side of the membrane; it reads CISFVLAWFEEGEETITAFV. The helical transmembrane segment at 90 to 110 threads the bilayer; that stretch reads EPFVILLILIANAIVGVWQER. Topologically, residues 111–253 are cytoplasmic; it reads NAEDAIEALK…QEKTPLQAKL (143 aa). Residues 254-273 form a helical membrane-spanning segment; the sequence is DEFGEQLSKVISLICVAVWA. Residues 274–295 are Lumenal-facing; sequence INIGHFNDPVHGGSWIRGAVYY. Residues 296–313 traverse the membrane as a helical segment; sequence FKIAVALAVAAIPEGLPA. Positions 304, 305, 307, and 309 each coordinate Ca(2+). The Cytoplasmic portion of the chain corresponds to 314–754; that stretch reads VITTCLALGT…EEGRAIYNNM (441 aa). D351 (4-aspartylphosphate intermediate) is an active-site residue. Residues D351 and T353 each coordinate Mg(2+). ATP is bound by residues T353, E442, R489, K512, R557, T622, G623, D624, R675, and K681. D700 provides a ligand contact to Mg(2+). Residue N703 participates in ATP binding. Residues 755–774 traverse the membrane as a helical segment; the sequence is KQFIRYLISSNVGEVVCIFL. 2 residues coordinate Ca(2+): N765 and E768. At 775-784 the chain is on the lumenal side; that stretch reads TAALGLPEAL. A helical membrane pass occupies residues 785–805; that stretch reads IPVQLLWVNLVTDGLPATALG. Residues 785–805 are interaction with PLN; the sequence is IPVQLLWVNLVTDGLPATALG. The Ca(2+) site is built by N793, T796, and D797. Residues 806-825 are Cytoplasmic-facing; the sequence is FNPPDLDIMGKPPRSPKEPL. Residues 826–848 form a helical membrane-spanning segment; the sequence is ISGWLFFRYMAIGGYVGAATVGG. Topologically, residues 849–894 are lumenal; it reads AAWWFLYDSTGPAVTYYQLSHFMQCHNHNEDFTGVDCDIFEASPPM. C873 and C885 form a disulfide bridge. Residues 895–914 traverse the membrane as a helical segment; sequence TMALSVLVTIEMCNALNSLS. E905 lines the Ca(2+) pocket. Residues 915–927 are Cytoplasmic-facing; the sequence is ENQSLIRMPPWSN. The helical transmembrane segment at 928 to 946 threads the bilayer; sequence LWLMAAMTLSMSLHFMIIY. Residues 929–940 are interaction with PLN; it reads WLMAAMTLSMSL. The Lumenal portion of the chain corresponds to 947 to 961; it reads VDPLPMIFKLTHLTF. A helical transmembrane segment spans residues 962–982; the sequence is DQWLMVFKLSFPVILIDEVLK. At 983–996 the chain is on the cytoplasmic side; sequence FFARNYIETGKEVK.

The protein belongs to the cation transport ATPase (P-type) (TC 3.A.3) family. Type IIA subfamily. Interacts with sarcolipin (SLN). Interacts with phospholamban (PLN). Interacts with myoregulin (MRLN). Interacts with DWORF. Mg(2+) serves as cofactor.

The protein resides in the endoplasmic reticulum membrane. The protein localises to the sarcoplasmic reticulum membrane. It carries out the reaction Ca(2+)(in) + ATP + H2O = Ca(2+)(out) + ADP + phosphate + H(+). With respect to regulation, inhibited by sarcolipin (SLN) and myoregulin (MRLN). Also shown to be inhibited by phospholamban (PLN) in vitro. Enhanced by DWORF; DWORF increases activity by displacing sarcolipin (SLN), phospholamban (PLN) and myoregulin (MRLN). Key regulator of striated muscle performance by acting as the major Ca(2+) ATPase responsible for the reuptake of cytosolic Ca(2+) into the sarcoplasmic reticulum. Catalyzes the hydrolysis of ATP coupled with the translocation of calcium from the cytosol to the sarcoplasmic reticulum lumen. Contributes to calcium sequestration involved in muscular excitation/contraction. This Makaira nigricans (Atlantic blue marlin) protein is Sarcoplasmic/endoplasmic reticulum calcium ATPase 1 (atp2a1).